A 141-amino-acid polypeptide reads, in one-letter code: Large ribosomal subunit protein uL11A (141 aa).

Belongs to the universal ribosomal protein uL11 family. In terms of assembly, part of the ribosomal stalk of the 50S ribosomal subunit. Interacts with L10 and the large rRNA to form the base of the stalk. L10 forms an elongated spine to which L12 dimers bind in a sequential fashion forming a multimeric L10(L12)X complex. One or more lysine residues are methylated.

Its function is as follows. Forms part of the ribosomal stalk which helps the ribosome interact with GTP-bound translation factors. This chain is Large ribosomal subunit protein uL11A, found in Bacillus cereus (strain ATCC 14579 / DSM 31 / CCUG 7414 / JCM 2152 / NBRC 15305 / NCIMB 9373 / NCTC 2599 / NRRL B-3711).